Consider the following 420-residue polypeptide: Pectate lyase (420 aa).

The signal sequence occupies residues 1-21 (MKKVMLATALFLGLTPAGANA). The segment at 117–139 (TWGKKEPSGTQEEARARSQKNQK) is disordered. A compositionally biased stretch (basic and acidic residues) spans 119–132 (GKKEPSGTQEEARA). Ca(2+) is bound by residues Asp205, Asp244, and Asp248. Residue Arg300 is part of the active site.

The protein belongs to the polysaccharide lyase 1 family. In terms of assembly, monomer. It depends on Ca(2+) as a cofactor.

It localises to the secreted. It carries out the reaction Eliminative cleavage of (1-&gt;4)-alpha-D-galacturonan to give oligosaccharides with 4-deoxy-alpha-D-galact-4-enuronosyl groups at their non-reducing ends.. It functions in the pathway glycan metabolism; pectin degradation; 2-dehydro-3-deoxy-D-gluconate from pectin: step 2/5. Functionally, produces unsaturated products from polygalacturonate. This chain is Pectate lyase (pel), found in Bacillus subtilis (strain 168).